Here is a 1001-residue protein sequence, read N- to C-terminus: Serine/threonine-protein kinase TAO1 (1001 aa).

Phosphoserine is present on serine 9. One can recognise a Protein kinase domain in the interval 28-281 (FTDLREIGHG…SEELLKHIFV (254 aa)). ATP contacts are provided by residues 34-42 (IGHGSFGAV) and lysine 57. Aspartate 151 serves as the catalytic Proton acceptor. A disordered region spans residues 324 to 433 (PAVEAQEEEE…QVSRHKSHYR (110 aa)). Over residues 350–373 (SNQSIPSMSISASSQSSSVNSLPD) the composition is skewed to low complexity. Basic and acidic residues-rich tracts occupy residues 375-388 (SDDK…EGDH) and 399-416 (LKPE…RTRA). 2 positions are modified to phosphoserine: serine 421 and serine 445. Positions 458–651 (SELREQMSGY…QTQKDLEHAM (194 aa)) form a coiled coil. The tract at residues 567 to 587 (KEELNENQSTPKKEKQEWLSK) is disordered. Over residues 577 to 587 (PKKEKQEWLSK) the composition is skewed to basic and acidic residues. Threonine 669 carries the phosphothreonine modification. Residues 754–877 (KAVLKRLKEE…LERQAREIEA (124 aa)) adopt a coiled-coil conformation. Positions 911-1001 (SHNPTGGPGP…ISNGSHMSYT (91 aa)) are disordered. Serine 965 bears the Phosphoserine mark. Polar residues predominate over residues 975-1001 (GGRTEQGMSRSTSVTSQISNGSHMSYT).

It belongs to the protein kinase superfamily. STE Ser/Thr protein kinase family. STE20 subfamily. As to quaternary structure, self-associates. Interacts with MAP2K3. Interacts with SPRED1. Interacts with TESK1; the interaction inhibits TAOK1 kinase activity. Interacts with MAP3K7. In terms of processing, proteolytically processed by caspase-3 (CASP3). Autophosphorylated. Phosphorylated by ATM in response to DNA damage. Phosphorylated by LRRK2. In terms of tissue distribution, highly expressed in the testis, and to a lower extent also expressed in brain, placenta, colon and skeletal muscle.

The protein localises to the cytoplasm. The catalysed reaction is L-seryl-[protein] + ATP = O-phospho-L-seryl-[protein] + ADP + H(+). It carries out the reaction L-threonyl-[protein] + ATP = O-phospho-L-threonyl-[protein] + ADP + H(+). With respect to regulation, serine/threonine-protein kinase activity is inhibited by SPRED1. In terms of biological role, serine/threonine-protein kinase involved in various processes such as p38/MAPK14 stress-activated MAPK cascade, DNA damage response and regulation of cytoskeleton stability. Phosphorylates MAP2K3, MAP2K6 and MARK2. Acts as an activator of the p38/MAPK14 stress-activated MAPK cascade by mediating phosphorylation and subsequent activation of the upstream MAP2K3 and MAP2K6 kinases. Involved in G-protein coupled receptor signaling to p38/MAPK14. In response to DNA damage, involved in the G2/M transition DNA damage checkpoint by activating the p38/MAPK14 stress-activated MAPK cascade, probably by mediating phosphorylation of MAP2K3 and MAP2K6. Acts as a regulator of cytoskeleton stability by phosphorylating 'Thr-208' of MARK2, leading to activate MARK2 kinase activity and subsequent phosphorylation and detachment of MAPT/TAU from microtubules. Also acts as a regulator of apoptosis: regulates apoptotic morphological changes, including cell contraction, membrane blebbing and apoptotic bodies formation via activation of the MAPK8/JNK cascade. Plays an essential role in the regulation of neuronal development in the central nervous system. Also plays a role in the regulation of neuronal migration to the cortical plate. This chain is Serine/threonine-protein kinase TAO1 (TAOK1), found in Homo sapiens (Human).